The chain runs to 134 residues: Interleukin-5 (134 aa).

Positions 1–19 (MRMLLHLSLLALGAAYVYA) are cleaved as a signal peptide. O-linked (GalNAc...) threonine glycosylation occurs at threonine 22. Asparagine 47 carries an N-linked (GlcNAc...) asparagine glycan.

It belongs to the IL-5 family. Homodimer; disulfide-linked. Interacts with IL5RA. Interacts with CSF2RB. As to expression, present in peripheral blood mononuclear cells.

It localises to the secreted. Functionally, homodimeric cytokine expressed predominantly by T-lymphocytes and NK cells that plays an important role in the survival, differentiation, and chemotaxis of eosinophils. Also acts on activated and resting B-cells to induce immunoglobulin production, growth, and differentiation. Mechanistically, exerts its biological effects through a receptor composed of IL5RA subunit and the cytokine receptor common subunit beta/CSF2RB. Binding to the receptor leads to activation of various kinases including LYN, SYK and JAK2 and thereby propagates signals through the RAS-MAPK and JAK-STAT5 pathways respectively. This is Interleukin-5 (IL5) from Homo sapiens (Human).